The sequence spans 458 residues: Light-independent protochlorophyllide reductase subunit N (458 aa).

3 residues coordinate [4Fe-4S] cluster: Cys22, Cys47, and Cys107.

The protein belongs to the BchN/ChlN family. As to quaternary structure, protochlorophyllide reductase is composed of three subunits; ChlL, ChlN and ChlB. Forms a heterotetramer of two ChlB and two ChlN subunits. [4Fe-4S] cluster serves as cofactor.

The protein localises to the plastid. It is found in the chloroplast. It carries out the reaction chlorophyllide a + oxidized 2[4Fe-4S]-[ferredoxin] + 2 ADP + 2 phosphate = protochlorophyllide a + reduced 2[4Fe-4S]-[ferredoxin] + 2 ATP + 2 H2O. The protein operates within porphyrin-containing compound metabolism; chlorophyll biosynthesis (light-independent). Its function is as follows. Component of the dark-operative protochlorophyllide reductase (DPOR) that uses Mg-ATP and reduced ferredoxin to reduce ring D of protochlorophyllide (Pchlide) to form chlorophyllide a (Chlide). This reaction is light-independent. The NB-protein (ChlN-ChlB) is the catalytic component of the complex. The sequence is that of Light-independent protochlorophyllide reductase subunit N from Chaetosphaeridium globosum (Charophycean green alga).